A 51-amino-acid chain; its full sequence is uncharacterized protein (51 aa).

To E.coli YdaF.

This is an uncharacterized protein from Escherichia coli O157:H7.